Here is a 431-residue protein sequence, read N- to C-terminus: Alpha-gurjunene synthase (431 aa).

2 residues coordinate Mg(2+): D126 and D130. R267 serves as a coordination point for (2E,6E)-farnesyl diphosphate. Residues N321 and S325 each contribute to the Mg(2+) site. A (2E,6E)-farnesyl diphosphate-binding site is contributed by K328. E329 is a Mg(2+) binding site. A (2E,6E)-farnesyl diphosphate-binding site is contributed by 412-413; it reads RY.

The protein belongs to the terpene synthase family. Requires Mg(2+) as cofactor.

The catalysed reaction is (2E,6E)-farnesyl diphosphate = (-)-alpha-gurjunene + diphosphate. The enzyme catalyses (2E,6E)-farnesyl diphosphate + H2O = 5-hydroxy-alpha-gurjunene + diphosphate. The protein operates within secondary metabolite biosynthesis; terpenoid biosynthesis. Its function is as follows. Catalyzes the conversion of (2E,6E)-farnesyl diphosphate (FPP) into the sesquiterpene alcohols (-)-alpha-gurjunene and 5-hydroxy-alpha-gurjunene. Other unidentified sesquiterpene alcohols found to be catalyzed by MTPSL4 may arise from carbocation reaction intermediates along the catalytic cascade to gurjunene being quenched by a water molecule, yielding formation of the alcohols. This chain is Alpha-gurjunene synthase, found in Marchantia polymorpha (Common liverwort).